The chain runs to 288 residues: ATP synthase gamma chain (288 aa).

Belongs to the ATPase gamma chain family. F-type ATPases have 2 components, CF(1) - the catalytic core - and CF(0) - the membrane proton channel. CF(1) has five subunits: alpha(3), beta(3), gamma(1), delta(1), epsilon(1). CF(0) has three main subunits: a, b and c.

The protein resides in the cell inner membrane. Produces ATP from ADP in the presence of a proton gradient across the membrane. The gamma chain is believed to be important in regulating ATPase activity and the flow of protons through the CF(0) complex. The polypeptide is ATP synthase gamma chain (Glaesserella parasuis serovar 5 (strain SH0165) (Haemophilus parasuis)).